We begin with the raw amino-acid sequence, 1556 residues long: Disco-interacting protein 2 homolog C (1556 aa).

Positions 7 to 120 (EGMALPLEVR…PMPSKRRSLV (114 aa)) constitute a DMAP1-binding domain. Disordered regions lie at residues 47–157 (YLPQ…SQGS) and 170–189 (GSTTSTTSSSSTQSGGSGAA). Positions 81–93 (GSRDERYRSDVHT) are enriched in basic and acidic residues. Composition is skewed to polar residues over residues 120 to 136 (VVQTSMDAYTPPDTSSG) and 144 to 157 (QGDSQGTPTSSQGS). The span at 170–183 (GSTTSTTSSSSTQS) shows a compositional bias: low complexity. Phosphothreonine is present on Thr264.

It belongs to the DIP2 family.

This chain is Disco-interacting protein 2 homolog C (DIP2C), found in Homo sapiens (Human).